The chain runs to 318 residues: Pantothenate kinase (318 aa).

Residue 96–103 (GSVAVGKS) participates in ATP binding.

This sequence belongs to the prokaryotic pantothenate kinase family.

It is found in the cytoplasm. It catalyses the reaction (R)-pantothenate + ATP = (R)-4'-phosphopantothenate + ADP + H(+). It participates in cofactor biosynthesis; coenzyme A biosynthesis; CoA from (R)-pantothenate: step 1/5. The chain is Pantothenate kinase from Coxiella burnetii (strain Dugway 5J108-111).